Reading from the N-terminus, the 877-residue chain is Envelope glycoprotein gp160 (877 aa).

An N-terminal signal peptide occupies residues 1-19 (MKLTLLIGILLIGIGVVLN). The Extracellular segment spans residues 20–707 (TRQQWVTVFY…SWFDFSKWLN (688 aa)). N-linked (GlcNAc...) asparagine; by host glycans are attached at residues asparagine 36, asparagine 69, asparagine 118, asparagine 135, asparagine 148, asparagine 158, asparagine 173, asparagine 204, asparagine 216, asparagine 258, asparagine 261, asparagine 272, asparagine 282, asparagine 288, asparagine 300, asparagine 312, asparagine 322, asparagine 379, asparagine 420, asparagine 431, asparagine 495, and asparagine 498. Disulfide bonds link cysteine 102–cysteine 224, cysteine 109–cysteine 215, cysteine 114–cysteine 174, cysteine 237–cysteine 267, and cysteine 247–cysteine 259. The segment at 114–173 (CVELNSSEPTTTPKSTTASTTNITASTTTLPCVQNKTSTVLESCNETIIEKELNEEPASN) is V1. Positions 174–215 (CTFAMAGYVRDQKKKYSVVWNDAEIMCKKGNNSNRECYMIHC) are V2. Positions 317–349 (CKRPGNKTVLPVTIMAGLVFHSQRYNTRLRQAW) are V3. The cysteines at positions 317 and 350 are disulfide-linked. 2 disulfides stabilise this stretch: cysteine 402–cysteine 478 and cysteine 409–cysteine 451. Positions 409-451 (CKMDWFLNYLNNRTVDPDHNPCNGTKGKGKAPGPCAQRTYVAC) are V4. The segment at 494–501 (KNRTNVTL) is V5. The tract at residues 544–564 (VPFVLGFLGFLGAAGTAMGAA) is fusion peptide. Positions 607 to 623 (LNARVTALEKYLEDQAR) are immunosuppression. Residues asparagine 652 and asparagine 668 are each glycosylated (N-linked (GlcNAc...) asparagine; by host). Residues 668 to 692 (NITTQLEEARAQEEKNLDAYQKLSS) adopt a coiled-coil conformation. The tract at residues 689–710 (KLSSWSDFWSWFDFSKWLNILK) is MPER; binding to GalCer. Residues 708–728 (ILKIGFLDVLGIIGLRLLYTV) traverse the membrane as a helical segment. Residues 729 to 877 (YSCIARVRQG…VRQGLEGILN (149 aa)) are Cytoplasmic-facing. Residues 739–742 (YSPL) carry the YXXL motif; contains endocytosis signal motif. The tract at residues 751-779 (WKGQPDNAEGPGEGGDKRKNSSEPWQKES) is disordered.

As to quaternary structure, the mature envelope protein (Env) consists of a homotrimer of non-covalently associated gp120-gp41 heterodimers. The resulting complex protrudes from the virus surface as a spike. Interacts with host CD4 and CCR5. Gp120 also interacts with the C-type lectins CD209/DC-SIGN and CLEC4M/DC-SIGNR (collectively referred to as DC-SIGN(R)). The mature envelope protein (Env) consists of a homotrimer of non-covalently associated gp120-gp41 heterodimers. The resulting complex protrudes from the virus surface as a spike. Specific enzymatic cleavages in vivo yield mature proteins. Envelope glycoproteins are synthesized as an inactive precursor that is heavily N-glycosylated and processed likely by host cell furin in the Golgi to yield the mature SU and TM proteins. The cleavage site between SU and TM requires the minimal sequence [KR]-X-[KR]-R.

It is found in the virion membrane. It localises to the host cell membrane. The protein resides in the host endosome membrane. In terms of biological role, the surface protein gp120 (SU) attaches the virus to the host lymphoid cell by binding to the primary receptor CD4. This interaction induces a structural rearrangement creating a high affinity binding site for a chemokine coreceptor like CCR5. This peculiar 2 stage receptor-interaction strategy allows gp120 to maintain the highly conserved coreceptor-binding site in a cryptic conformation, protected from neutralizing antibodies. These changes are transmitted to the transmembrane protein gp41 and are thought to activate its fusogenic potential by unmasking its fusion peptide. Surface protein gp120 (SU) may target the virus to gut-associated lymphoid tissue (GALT) by binding host ITGA4/ITGB7 (alpha-4/beta-7 integrins), a complex that mediates T-cell migration to the GALT. Interaction between gp120 and ITGA4/ITGB7 would allow the virus to enter GALT early in the infection, infecting and killing most of GALT's resting CD4+ T-cells. This T-cell depletion is believed to be the major insult to the host immune system leading to AIDS. Its function is as follows. The surface protein gp120 is a ligand for CD209/DC-SIGN and CLEC4M/DC-SIGNR, which are respectively found on dendritic cells (DCs), and on endothelial cells of liver sinusoids and lymph node sinuses. These interactions allow capture of viral particles at mucosal surfaces by these cells and subsequent transmission to permissive cells. DCs are professional antigen presenting cells, critical for host immunity by inducing specific immune responses against a broad variety of pathogens. They act as sentinels in various tissues where they take up antigen, process it, and present it to T-cells following migration to lymphoid organs. SIV subverts the migration properties of dendritic cells to gain access to CD4+ T-cells in lymph nodes. Virus transmission to permissive T-cells occurs either in trans (without DCs infection, through viral capture and transmission), or in cis (following DCs productive infection, through the usual CD4-gp120 interaction), thereby inducing a robust infection. In trans infection, bound virions remain infectious over days and it is proposed that they are not degraded, but protected in non-lysosomal acidic organelles within the DCs close to the cell membrane thus contributing to the viral infectious potential during DCs' migration from the periphery to the lymphoid tissues. On arrival at lymphoid tissues, intact virions recycle back to DCs' cell surface allowing virus transmission to CD4+ T-cells. Virion capture also seems to lead to MHC-II-restricted viral antigen presentation, and probably to the activation of SIV-specific CD4+ cells. Functionally, the transmembrane protein gp41 (TM) acts as a class I viral fusion protein. Under the current model, the protein has at least 3 conformational states: pre-fusion native state, pre-hairpin intermediate state, and post-fusion hairpin state. During fusion of viral and target intracellular membranes, the coiled coil regions (heptad repeats) assume a trimer-of-hairpins structure, positioning the fusion peptide in close proximity to the C-terminal region of the ectodomain. The formation of this structure appears to drive apposition and subsequent fusion of viral and target cell membranes. Complete fusion occurs in host cell endosomes. The virus undergoes clathrin-dependent internalization long before endosomal fusion, thus minimizing the surface exposure of conserved viral epitopes during fusion and reducing the efficacy of inhibitors targeting these epitopes. Membranes fusion leads to delivery of the nucleocapsid into the cytoplasm. In terms of biological role, the envelope glycoprotein gp160 precursor down-modulates cell surface CD4 antigen by interacting with it in the endoplasmic reticulum and blocking its transport to the cell surface. The gp120-gp41 heterodimer allows rapid transcytosis of the virus through CD4 negative cells such as simple epithelial monolayers of the intestinal, rectal and endocervical epithelial barriers. Both gp120 and gp41 specifically recognize glycosphingolipids galactosyl-ceramide (GalCer) or 3' sulfo-galactosyl-ceramide (GalS) present in the lipid rafts structures of epithelial cells. Binding to these alternative receptors allows the rapid transcytosis of the virus through the epithelial cells. This transcytotic vesicle-mediated transport of virions from the apical side to the basolateral side of the epithelial cells does not involve infection of the cells themselves. This is Envelope glycoprotein gp160 (env) from Cercopithecidae (Old World monkeys).